A 163-amino-acid chain; its full sequence is Cyanate hydratase (163 aa).

Active-site residues include Arg103, Glu106, and Ser129.

It belongs to the cyanase family.

The enzyme catalyses cyanate + hydrogencarbonate + 3 H(+) = NH4(+) + 2 CO2. Functionally, catalyzes the reaction of cyanate with bicarbonate to produce ammonia and carbon dioxide. This Ajellomyces capsulatus (strain G186AR / H82 / ATCC MYA-2454 / RMSCC 2432) (Darling's disease fungus) protein is Cyanate hydratase.